Reading from the N-terminus, the 304-residue chain is Mediator of RNA polymerase II transcription subunit 7 (304 aa).

2 disordered regions span residues 42 to 85 and 137 to 158; these read NNQT…PKQP and NTDTDINGNQEVDAGDSTGDEN.

Belongs to the Mediator complex subunit 7 family. Component of the Mediator complex.

It localises to the nucleus. Functionally, component of the Mediator complex, a coactivator involved in the regulated transcription of nearly all RNA polymerase II-dependent genes. Mediator functions as a bridge to convey information from gene-specific regulatory proteins to the basal RNA polymerase II transcription machinery. Mediator is recruited to promoters by direct interactions with regulatory proteins and serves as a scaffold for the assembly of a functional preinitiation complex with RNA polymerase II and the general transcription factors. The chain is Mediator of RNA polymerase II transcription subunit 7 (MED7) from Candida albicans (strain SC5314 / ATCC MYA-2876) (Yeast).